A 119-amino-acid polypeptide reads, in one-letter code: NADH-quinone oxidoreductase subunit A (119 aa).

The next 3 membrane-spanning stretches (helical) occupy residues 7 to 27 (FPVL…MSIG), 63 to 83 (LIAI…PWGV), and 88 to 108 (IGWP…VGFV).

Belongs to the complex I subunit 3 family. NDH-1 is composed of 14 different subunits. Subunits NuoA, H, J, K, L, M, N constitute the membrane sector of the complex.

The protein resides in the cell inner membrane. It carries out the reaction a quinone + NADH + 5 H(+)(in) = a quinol + NAD(+) + 4 H(+)(out). Its function is as follows. NDH-1 shuttles electrons from NADH, via FMN and iron-sulfur (Fe-S) centers, to quinones in the respiratory chain. The immediate electron acceptor for the enzyme in this species is believed to be ubiquinone. Couples the redox reaction to proton translocation (for every two electrons transferred, four hydrogen ions are translocated across the cytoplasmic membrane), and thus conserves the redox energy in a proton gradient. The chain is NADH-quinone oxidoreductase subunit A from Cupriavidus pinatubonensis (strain JMP 134 / LMG 1197) (Cupriavidus necator (strain JMP 134)).